Consider the following 271-residue polypeptide: Bifunctional protein FolD (271 aa).

NADP(+) is bound by residues 154 to 156, T181, and I222; that span reads GRS.

The protein belongs to the tetrahydrofolate dehydrogenase/cyclohydrolase family. As to quaternary structure, homodimer.

It carries out the reaction (6R)-5,10-methylene-5,6,7,8-tetrahydrofolate + NADP(+) = (6R)-5,10-methenyltetrahydrofolate + NADPH. The catalysed reaction is (6R)-5,10-methenyltetrahydrofolate + H2O = (6R)-10-formyltetrahydrofolate + H(+). It participates in one-carbon metabolism; tetrahydrofolate interconversion. Its function is as follows. Catalyzes the oxidation of 5,10-methylenetetrahydrofolate to 5,10-methenyltetrahydrofolate and then the hydrolysis of 5,10-methenyltetrahydrofolate to 10-formyltetrahydrofolate. This chain is Bifunctional protein FolD, found in Thermosipho melanesiensis (strain DSM 12029 / CIP 104789 / BI429).